Reading from the N-terminus, the 1020-residue chain is MVLPTCPMAEFALPRHSAVMERLRRRIELCRRHHSTCEARYEAVSPERLELERQHTFALHQRCIQAKAKRAGKHRQPPAAATAPVAAPAPASAPAAARLDAADGPEHGRPVAHLHDTVKRSLDSAASPQNGDQPNGYGDLFPGHKKTRREAPLGVSVSANGLPPASPLGQPDKPSGGDTLQTAGKHSLGLDPINKKCLADSGIHLNGGSNSSEPFPLSLSKELKQEPVDDLPCMIAGAGGSVAQSNLMPDLNLNEQEWKELIEELNRSVPDEDMKDLFTEDFEEKKDPEPPGSATQTPLAQDINIKTEFSPAAFEQEQLGSPQVRAGSAGQTFLGASSAPVGTDSPSLGSSQTLFHTTSQPGVDNSSPNLMPASAQAQSAQRALTSVVLPSQGPGGASELSSAHQLQQIAAKQKREQMLQNPQQAAPAPGPGQLATWQQAGPSHSPLDVPYPMEKPASPSGYKQDFTNSKLLMMPGVNKSSPRPGGPYLQPSHSNLLSHQSPSNLNQNPVNNQGSVLDYGNTKPLSHYKADCGQGGPGSGQNKPALMAYLPQQLPHLSNEQNSLFLMKPKSGNMPFRSLVPPGQEQNPSSVPVAAPAASVGTQPTVSVASTHNSSPYLSSQQQAAVMKQHQLLLDQQKQREQQQQQLQQQQFLQRQHLLAEQEKQQFQRHLTRPPPQYQDPTQSTFPQQVGQFTGPSAAVPGMNNLGPSNSSCPRVFPQPGTLMSMGPGHAPVSSLPSSSGQQDRGVAQFTGSQSLPQNSLYGMASGLAQIVAQPPPQATSTHAHIPRQTNVGQNASTSAAYGQNSLGSASLSQQHSKGTLPPGLTKPQVPRVSAAMGSQNASWQHQGMPNLSSQTSGNSSVNPFTAAPSFHIQQAHLKLAGQQFSQAMPSRPMAPLSSAGAAGPMLPPVSAQQRNSAPASAPPQAAPQQGLPGLSPSGPELGAFGQSPTSQMSGRPGLHCAQAYPVRTMGQELPFAYSGQPGSSGLSSVAGHTDLIDSLLKNRTSEEWINELDDLLGSQ.

The required for interaction with NOTCH proteins stretch occupies residues 1 to 97 (MVLPTCPMAE…PAPASAPAAA (97 aa)). Serine 45 carries the phosphoserine modification. Residues 67–76 (KAKRAGKHRQ) are compositionally biased toward basic residues. Residues 67–191 (KAKRAGKHRQ…TAGKHSLGLD (125 aa)) are disordered. A compositionally biased stretch (low complexity) spans 77–99 (PPAAATAPVAAPAPASAPAAARL). The span at 100–122 (DAADGPEHGRPVAHLHDTVKRSL) shows a compositional bias: basic and acidic residues. Residues 124–133 (SAASPQNGDQ) show a composition bias toward polar residues. 4 positions are modified to phosphoserine: serine 127, serine 310, serine 321, and serine 367. Disordered stretches follow at residues 335–522 (GASS…YGNT), 575–598 (PFRS…APAA), 663–686 (EKQQ…QSTF), 725–748 (SMGP…RGVA), 794–866 (QNAS…NPFT), and 888–959 (AMPS…RPGL). Polar residues predominate over residues 344–369 (DSPSLGSSQTLFHTTSQPGVDNSSPN). Residues 373–383 (ASAQAQSAQRA) are compositionally biased toward low complexity. Polar residues predominate over residues 399–410 (ELSSAHQLQQIA). A compositionally biased stretch (low complexity) spans 419-435 (LQNPQQAAPAPGPGQLA). Residues 491-515 (PSHSNLLSHQSPSNLNQNPVNNQGS) show a composition bias toward polar residues. Positions 588 to 598 (PSSVPVAAPAA) are enriched in low complexity. Positions 794–818 (QNASTSAAYGQNSLGSASLSQQHSK) are enriched in polar residues. N6-acetyllysine is present on lysine 827. Over residues 837–864 (MGSQNASWQHQGMPNLSSQTSGNSSVNP) the composition is skewed to polar residues. Over residues 911–920 (SAQQRNSAPA) the composition is skewed to low complexity. Serine 1019 carries the post-translational modification Phosphoserine.

It belongs to the mastermind family. As to quaternary structure, interacts (via N-terminus) with NOTCH1, NOTCH2, NOTCH3 and NOTCH4 (via ankyrin repeat region). Interacts (via N-terminus) with p53 (via DNA-binding region). Forms a DNA-binding complex with Notch proteins and RBPSUH/RBP-J kappa/CBF1. Also binds CREBBP/CBP and CDK8. Forms a complex with PRAG1, NOTCH1 and MAML1, in a MAML1-dependent manner. At E9.5, strongly expressed in the telencephalon, first branchial arch, forelimb buds and somites. By 10.5 dpc, continuously expressed in brain and spinal cord. Also expressed in first and second branchial arches and limb buds. By 11.5 dpc, expression in CNS is weak but increases in mesodermal tissues. At 14.5 dpc, detected in epithelial cells in trachea, esophagus and proximal and distal tubules of the developing lungs.

It is found in the nucleus speckle. Functionally, acts as a transcriptional coactivator for NOTCH proteins. Has been shown to amplify NOTCH-induced transcription of HES1. Enhances phosphorylation and proteolytic turnover of the NOTCH intracellular domain in the nucleus through interaction with CDK8. Binds to CREBBP/CBP which promotes nucleosome acetylation at NOTCH enhancers and activates transcription. Induces phosphorylation and localization of CREBBP to nuclear foci. Plays a role in hematopoietic development by regulating NOTCH-mediated lymphoid cell fate decisions. In Mus musculus (Mouse), this protein is Mastermind-like protein 1.